Here is a 475-residue protein sequence, read N- to C-terminus: Cytosolic non-specific dipeptidase (475 aa).

An N-acetylalanine modification is found at alanine 2. Lysine 9 bears the N6-acetyllysine mark. Phosphoserine is present on serine 58. Histidine 99 contributes to the Mn(2+) binding site. Residue aspartate 101 is part of the active site. Aspartate 132 is a binding site for Mn(2+). Glutamate 166 functions as the Proton acceptor in the catalytic mechanism. Substrate is bound by residues 166–167 (EE), aspartate 195, and histidine 228. Positions 167 and 195 each coordinate Mn(2+). Phosphoserine is present on serine 299. Substrate-binding residues include threonine 330, arginine 343, serine 417, and histidine 445. Histidine 445 contacts Mn(2+).

Belongs to the peptidase M20A family. Homodimer. Mn(2+) is required as a cofactor. Ubiquitously expressed with higher levels in kidney and liver (at protein level). Expressed in peripheral blood leukocytes. Expressed in gastric mucosa and down-regulated in gastric cancer mucosal tissues (at protein level). As to expression, broadly expressed in fetal tissues. Expressed in adult liver and placenta.

Its subcellular location is the cytoplasm. The catalysed reaction is Hydrolysis of dipeptides, preferentially hydrophobic dipeptides including prolyl amino acids.. It carries out the reaction L-threonyl-L-threonine + H2O = 2 L-threonine. It catalyses the reaction L-threonyl-L-serine + H2O = L-threonine + L-serine. The enzyme catalyses L-seryl-L-threonine + H2O = L-threonine + L-serine. The catalysed reaction is L-cysteinylglycine + H2O = L-cysteine + glycine. It carries out the reaction L-alanyl-L-cysteine + H2O = L-cysteine + L-alanine. It catalyses the reaction (S)-lactate + L-phenylalanine = N-[(S)-lactoyl]-L-phenylalanine + H2O. With respect to regulation, inhibited by p-hydroxymercurybenzoate. The inhibitory concentration 50% (IC(50)) is 13 uM. Inhibited by bestatin. The inhibitory concentration 50% (IC(50)) is 7 nM at pH 9.5. Its function is as follows. Catalyzes the peptide bond hydrolysis in dipeptides, displaying a non-redundant activity toward threonyl dipeptides. Mediates threonyl dipeptide catabolism in a tissue-specific way. Has high dipeptidase activity toward cysteinylglycine, an intermediate metabolite in glutathione metabolism. Metabolizes N-lactoyl-amino acids, both through hydrolysis to form lactic acid and amino acids, as well as through their formation by reverse proteolysis. Plays a role in the regulation of cell cycle arrest and apoptosis. This Homo sapiens (Human) protein is Cytosolic non-specific dipeptidase.